A 706-amino-acid chain; its full sequence is Coiled-coil domain-containing protein 177 (706 aa).

Acidic residues predominate over residues 1–11 (MVDPVPEEEKE). Disordered regions lie at residues 1–63 (MVDP…GGRR), 179–262 (ASAL…LREL), and 268–287 (ASAR…NPLG). Composition is skewed to low complexity over residues 28–49 (PPDA…AAAP) and 179–209 (ASAL…RRTS). The segment covering 210–221 (PSPPARSRPPPA) has biased composition (pro residues). The segment covering 242–257 (ALSSESGASSSSYSGE) has biased composition (low complexity). A Phosphoserine modification is found at Ser310. Positions 360–624 (AAHGQWEQQR…QTRLEKERAQ (265 aa)) form a coiled coil. 4 disordered regions span residues 364–386 (QWEQ…KQRA), 398–425 (VEER…RSEE), 448–580 (DDRL…EREH), and 651–706 (ERSE…LDRK). The span at 368 to 386 (QRVRAEQRREREEREKQRA) shows a compositional bias: basic and acidic residues. Composition is skewed to basic and acidic residues over residues 448–529 (DDRL…REGL), 548–580 (QEQR…EREH), and 651–663 (ERSE…RRSA). The segment covering 664-674 (LESARSTARAS) has biased composition (low complexity). Residues 676-706 (HVREKVREETNTRSFDRMVREAQLHASLDRK) show a composition bias toward basic and acidic residues.

The polypeptide is Coiled-coil domain-containing protein 177 (Ccdc177) (Mus musculus (Mouse)).